The following is a 565-amino-acid chain: Wee1-like protein kinase 2 (565 aa).

2 stretches are compositionally biased toward basic and acidic residues: residues 1-12 (MGDNGDNKELKQ) and 26-52 (EGQK…DSEA). Disordered stretches follow at residues 1-142 (MGDN…TPGP) and 169-189 (KSNG…EEGK). S77 is subject to Phosphoserine. A Nuclear localization signal motif is present at residues 173 to 175 (KRK). Over residues 178–189 (RDLEEAGPEEGK) the composition is skewed to basic and acidic residues. A Protein kinase domain is found at 214–492 (FLEVEKIGVG…TRSRVLCPSL (279 aa)). ATP is bound by residues 220–228 (IGVGEFGTV) and K243. The Nuclear export signal signature appears at 317–331 (KLKDILLQISLGLKY). The active-site Proton acceptor is the D341. 2 residues coordinate Mg(2+): N346 and D382. Residues 495 to 521 (TEELQQQLNLEKFKTATLERELKEVQR) adopt a coiled-coil conformation. Residues 518–565 (EVQRAQSSKEGQSSPGVTGTHTGSRSTRRLVGGKSAKSSSFTWGQSSP) form a disordered region. Composition is skewed to polar residues over residues 521 to 534 (RAQS…SPGV) and 553 to 565 (AKSS…QSSP).

Belongs to the protein kinase superfamily. Ser/Thr protein kinase family. WEE1 subfamily. Phosphorylation leads to increase its activity. In terms of tissue distribution, ovary-specific.

The protein resides in the nucleus. It carries out the reaction L-tyrosyl-[protein] + ATP = O-phospho-L-tyrosyl-[protein] + ADP + H(+). Its function is as follows. Oocyte-specific protein tyrosine kinase that phosphorylates and inhibits CDK1 and acts as a key regulator of meiosis during both prophase I and metaphase II. Required to maintain meiotic arrest in oocytes during the germinal vesicle (GV) stage, a long period of quiescence at dictyate prophase I, by phosphorylating CDK1 at 'Tyr-15', leading to inhibit CDK1 activity and prevent meiotic reentry. Also required for metaphase II exit during egg activation by phosphorylating CDK1 at 'Tyr-15', to ensure exit from meiosis in oocytes and promote pronuclear formation. The chain is Wee1-like protein kinase 2 (WEE2) from Sus scrofa (Pig).